Reading from the N-terminus, the 195-residue chain is MRTATVQRTTKETDIAITVNLDGTGDYSVSTGIGFLDHMVEQLSRHSLIDISMQVKGDLHIDQHHTVEDSALALGEAVAKALGDKRGIARYGEAHAPMDETLTRCVLDISGRPHCVYKSSFSQPRLGEMDTEMFPHWFHSFAQTAGITLHIETLYGENNHHIAESMYKALARALRQAVEIDPRKGDAIPSTKGVL.

It belongs to the imidazoleglycerol-phosphate dehydratase family.

The protein resides in the cytoplasm. It catalyses the reaction D-erythro-1-(imidazol-4-yl)glycerol 3-phosphate = 3-(imidazol-4-yl)-2-oxopropyl phosphate + H2O. The protein operates within amino-acid biosynthesis; L-histidine biosynthesis; L-histidine from 5-phospho-alpha-D-ribose 1-diphosphate: step 6/9. The chain is Imidazoleglycerol-phosphate dehydratase from Sphingopyxis alaskensis (strain DSM 13593 / LMG 18877 / RB2256) (Sphingomonas alaskensis).